The primary structure comprises 892 residues: Translation initiation factor IF-2 (892 aa).

The tract at residues 88–305 (KKRTFVKRDP…SLQQGFQKPA (218 aa)) is disordered. Basic and acidic residues-rich tracts occupy residues 93–159 (VKRD…KDKV) and 166–216 (DMTK…EENK). The span at 254 to 269 (GRGRNAKAARPAKKGK) shows a compositional bias: basic residues. The segment covering 270 to 282 (HAESKADREEARA) has biased composition (basic and acidic residues). The tr-type G domain maps to 391–560 (PRAPVVTIMG…LLQAEVLELK (170 aa)). The interval 400 to 407 (GHVDHGKT) is G1. 400-407 (GHVDHGKT) provides a ligand contact to GTP. Residues 425-429 (GITQH) are G2. The interval 446–449 (DTPG) is G3. GTP contacts are provided by residues 446 to 450 (DTPGH) and 500 to 503 (NKID). Residues 500–503 (NKID) are G4. The interval 536–538 (SAK) is G5.

It belongs to the TRAFAC class translation factor GTPase superfamily. Classic translation factor GTPase family. IF-2 subfamily.

Its subcellular location is the cytoplasm. In terms of biological role, one of the essential components for the initiation of protein synthesis. Protects formylmethionyl-tRNA from spontaneous hydrolysis and promotes its binding to the 30S ribosomal subunits. Also involved in the hydrolysis of GTP during the formation of the 70S ribosomal complex. In Salmonella paratyphi A (strain ATCC 9150 / SARB42), this protein is Translation initiation factor IF-2.